Consider the following 103-residue polypeptide: Large ribosomal subunit protein bL21 (103 aa).

Belongs to the bacterial ribosomal protein bL21 family. Part of the 50S ribosomal subunit. Contacts protein L20.

In terms of biological role, this protein binds to 23S rRNA in the presence of protein L20. This chain is Large ribosomal subunit protein bL21, found in Ralstonia nicotianae (strain ATCC BAA-1114 / GMI1000) (Ralstonia solanacearum).